Consider the following 562-residue polypeptide: Arginine--tRNA ligase 2 (562 aa).

Residues Pro-122 to His-132 carry the 'HIGH' region motif.

Belongs to the class-I aminoacyl-tRNA synthetase family. Monomer.

Its subcellular location is the cytoplasm. It carries out the reaction tRNA(Arg) + L-arginine + ATP = L-arginyl-tRNA(Arg) + AMP + diphosphate. In Bacillus anthracis, this protein is Arginine--tRNA ligase 2 (argS2).